The following is a 380-amino-acid chain: Protein arginine N-methyltransferase PRMT10 (380 aa).

Positions 26 to 357 (EVDFANYFCT…KENHRLMDME (332 aa)) constitute an SAM-dependent MTase PRMT-type domain. Residues Gln-42, Arg-51, Gly-75, Glu-97, and Glu-126 each coordinate S-adenosyl-L-methionine. Catalysis depends on residues Glu-140 and Glu-149. The tract at residues 187–227 (ENKMEDLEIAMHDWNLFVEDTESYYGVNMNVLTKAYRAEHE) is dimerization arm.

It belongs to the class I-like SAM-binding methyltransferase superfamily. Protein arginine N-methyltransferase family. Ring-like homodimer.

The catalysed reaction is L-arginyl-[protein] + 2 S-adenosyl-L-methionine = N(omega),N(omega)-dimethyl-L-arginyl-[protein] + 2 S-adenosyl-L-homocysteine + 2 H(+). In terms of biological role, methylates (mono and asymmetric dimethylation) the guanidino nitrogens of arginyl residues in some proteins. The sequence is that of Protein arginine N-methyltransferase PRMT10 (PRMT10) from Oryza sativa subsp. japonica (Rice).